Reading from the N-terminus, the 380-residue chain is GDSL esterase/lipase At3g26430 (380 aa).

Positions 1–25 are cleaved as a signal peptide; it reads METNLLLVKCVLLASCLIHPRACSP. Serine 38 functions as the Nucleophile in the catalytic mechanism. 3 N-linked (GlcNAc...) asparagine glycosylation sites follow: asparagine 97, asparagine 115, and asparagine 183. Catalysis depends on residues aspartate 346 and histidine 349.

It belongs to the 'GDSL' lipolytic enzyme family.

The protein localises to the secreted. The enzyme catalyses hexadecanoate ester + H2O = an aliphatic alcohol + hexadecanoate + H(+). The catalysed reaction is a butanoate ester + H2O = an aliphatic alcohol + butanoate + H(+). Its activity is regulated as follows. Lipase activity is inhibited by phenylmethylsulfonyl fluoride (PMSF), but not neostigmine bromide (NB). Its function is as follows. Lipase that can hydrolyze p-nitrophenyl butyrate and p-nitrophenyl palmitate in vitro. Possesses low activity against p-nitrophenyl acetate. Substrate preference is p-nitrophenyl palmitate &gt; p-nitrophenyl butyrate &gt;&gt; p-nitrophenyl acetate. Lacks cholinesterase activity. This chain is GDSL esterase/lipase At3g26430, found in Arabidopsis thaliana (Mouse-ear cress).